A 176-amino-acid polypeptide reads, in one-letter code: Small capsomere-interacting protein (176 aa).

Disordered stretches follow at residues 75-109 (DKRQRASVAGAGAHAHLGGSSATPVQQAQAAASAG) and 148-176 (ASAAAAVDTGSGGGGQPHDTAPRGARKKQ). A compositionally biased stretch (low complexity) spans 80-109 (ASVAGAGAHAHLGGSSATPVQQAQAAASAG).

This sequence belongs to the herpesviridae small capsomere-interacting protein family. As to quaternary structure, interacts with the major capsid protein/MCP.

It is found in the virion. Its subcellular location is the host nucleus. Participates in the assembly of the infectious particles by decorating the outer surface of the capsid shell and thus forming a layer between the capsid and the tegument. Complexes composed of the major capsid protein and small capsomere-interacting protein/SCP assemble together in the host cytoplasm and are translocated to the nucleus, where they accumulate and participate in capsid assembly. This is Small capsomere-interacting protein from Epstein-Barr virus (strain B95-8) (HHV-4).